A 505-amino-acid polypeptide reads, in one-letter code: Facilitated trehalose transporter Tret1 (505 aa).

Residues 1-46 lie on the Cytoplasmic side of the membrane; sequence MEMEIKDENLRNSVPFVRQLSTDSVKTKTEYDNEDGTPYKSTTQKL. A helical membrane pass occupies residues 47–67; that stretch reads FLWTQLLAAFAVSVGSMNVGF. The Extracellular portion of the chain corresponds to 68-91; that stretch reads SSGYTSPAVLTMNITLDITKEEIT. Asn-80 carries an N-linked (GlcNAc...) asparagine glycan. Residues 92 to 112 form a helical membrane-spanning segment; the sequence is WVGGLMPLAALVGGIVGGPLI. Residues 113–124 lie on the Cytoplasmic side of the membrane; that stretch reads EYLGRKKTIMGT. The helical transmembrane segment at 125–145 threads the bilayer; that stretch reads AVPFTIGWMLIANAINVVMVF. Over 146–149 the chain is Extracellular; the sequence is AGRV. The chain crosses the membrane as a helical span at residues 150-170; it reads ICGVCVGIVSLAFPVYIGETI. At 171–175 the chain is on the cytoplasmic side; sequence QPEVR. The chain crosses the membrane as a helical span at residues 176-196; that stretch reads GALGLLPTAFGNTGILLAFLV. The Extracellular segment spans residues 197–201; it reads GSYLD. Residues 202–222 form a helical membrane-spanning segment; the sequence is WSNLAFFGAAIPVPFFLLMIL. The Cytoplasmic segment spans residues 223 to 286; it reads TPETPRWYVS…QLFSKRYLPA (64 aa). The chain crosses the membrane as a helical span at residues 287-307; that stretch reads VMISLGLMLFQQLTGINAVIF. At 308-323 the chain is on the extracellular side; the sequence is YAASIFQMSGSSVDEN. A helical transmembrane segment spans residues 324–344; the sequence is LASIIIGVVNFISTFIATMLI. Over 345–350 the chain is Cytoplasmic; sequence DRLGRK. The helical transmembrane segment at 351–371 threads the bilayer; sequence VLLYISSVAMITTLLALGAYF. The Extracellular segment spans residues 372-390; that stretch reads YLKQNHIDVTAYGWLPLAC. The helical transmembrane segment at 391-411 threads the bilayer; sequence LVIYVLGFSIGFGPIPWLMLG. Residues 412–419 are Cytoplasmic-facing; the sequence is EILPSKIR. A helical transmembrane segment spans residues 420 to 437; the sequence is GTAASLATGFNWTCTFIV. Over 438 to 451 the chain is Extracellular; sequence TKTFQNIIDAIYMH. Residues 452–472 traverse the membrane as a helical segment; it reads GTLWLFAVICIGGLLFVIFFV. Over 473-505 the chain is Cytoplasmic; that stretch reads PETKGKSLEEIEMKLTSGSRRVRNISKQPENIC.

This sequence belongs to the major facilitator superfamily. Sugar transporter (TC 2.A.1.1) family. Trehalose transporter subfamily. As to expression, expressed in many larval tissues at a low level, moderate levels of expression are seen in testis and head and highest expression in muscle.

It is found in the cell membrane. In terms of biological role, high-capacity facilitative transporter for trehalose. Does not transport maltose, sucrose or lactose. Mediates the bidirectional transfer of trehalose. Responsible for the transport of trehalose synthesized in the fat body and the incorporation of trehalose into other tissues that require a carbon source, thereby regulating trehalose levels in the hemolymph. The sequence is that of Facilitated trehalose transporter Tret1 from Bombyx mori (Silk moth).